A 119-amino-acid polypeptide reads, in one-letter code: Acidic phospholipase A2 DE-II (119 aa).

7 disulfides stabilise this stretch: Cys-11-Cys-72, Cys-26-Cys-118, Cys-28-Cys-44, Cys-43-Cys-99, Cys-50-Cys-92, Cys-60-Cys-85, and Cys-79-Cys-90. Residues Tyr-27, Gly-29, and Gly-31 each coordinate Ca(2+). Residue His-47 is part of the active site. Position 48 (Asp-48) interacts with Ca(2+). The active site involves Asp-93.

This sequence belongs to the phospholipase A2 family. Group I subfamily. D49 sub-subfamily. Ca(2+) is required as a cofactor. Expressed by the venom gland.

It is found in the secreted. The enzyme catalyses a 1,2-diacyl-sn-glycero-3-phosphocholine + H2O = a 1-acyl-sn-glycero-3-phosphocholine + a fatty acid + H(+). Its function is as follows. PLA2 catalyzes the calcium-dependent hydrolysis of the 2-acyl groups in 3-sn-phosphoglycerides. The protein is Acidic phospholipase A2 DE-II of Naja melanoleuca (Forest cobra).